Consider the following 152-residue polypeptide: Protein Turandot X (152 aa).

An N-terminal signal peptide occupies residues 1 to 22 (MGFYISSLLICVFLGIVRFASA).

Belongs to the Turandot family.

The protein resides in the secreted. Its function is as follows. A humoral factor that may play a role in stress tolerance. The polypeptide is Protein Turandot X (Drosophila erecta (Fruit fly)).